A 276-amino-acid chain; its full sequence is MLERVAVLYNPLSDASIKLSRELADWLVERGVKTTRGVSQEFRDQPHLVADCDLMIALGGDGTVLRAARLCFPHNIPVLPVALGHLSFMAEIGPDEVYSGCEQIMNGGGWFDERSLVRAQLWRGGQKLSQHTALNEVVISRSDLSRIVNVHVTIDDSPLTTYHADGVIVATATGSTAYALAAGGPIVDPRSQALVLVPIAAHLTNIPSMVLHEDAVVTMQLRSRHHALLAVDGRENIDLIEGDEVVVRRSPQVCTFVRLRPSNQFYTQLVARLRRS.

Residue aspartate 61 is the Proton acceptor of the active site. NAD(+)-binding positions include 61-62, arginine 66, 135-136, arginine 146, histidine 163, aspartate 165, and alanine 200; these read DG and NE.

This sequence belongs to the NAD kinase family. It depends on a divalent metal cation as a cofactor.

It localises to the cytoplasm. It catalyses the reaction NAD(+) + ATP = ADP + NADP(+) + H(+). In terms of biological role, involved in the regulation of the intracellular balance of NAD and NADP, and is a key enzyme in the biosynthesis of NADP. Catalyzes specifically the phosphorylation on 2'-hydroxyl of the adenosine moiety of NAD to yield NADP. The protein is NAD kinase of Chloroflexus aurantiacus (strain ATCC 29366 / DSM 635 / J-10-fl).